Consider the following 344-residue polypeptide: MRKLFLDAFGEKKLDKPPVWIMRQAGRYLPEYRAVRAKFDNFMDMCRNADACCEVALHPLQRYDLDAAIVFSDILTIPEAMGMDLKFIKGTGPVFSEPIQSQKDLDKLKSIEDSIGSLDYVYNAVKTTSSAINVPLIGFTGSPWTLAAYMIEGSGSKQFNKLRKMMYANPQLMHSLLQRLADITIIYLLEQVKAGASSVMIFDTWGGILPLEHYKNFSLKYKEYIAKNVKQKINIPIVFFTKGGSNFFEEIKDKSCDGVGVDWSVTLKQARHRIGVGKVLQGNFDPAFLYGSKQSIRETVRANIEFIQSDKLNNYIVNLGHGIYPDIDPDSVRVMIDAIREFSA.

Residues 23–27 (RQAGR), Asp73, Tyr149, Thr204, and His321 each bind substrate.

This sequence belongs to the uroporphyrinogen decarboxylase family. As to quaternary structure, homodimer.

The protein resides in the cytoplasm. The catalysed reaction is uroporphyrinogen III + 4 H(+) = coproporphyrinogen III + 4 CO2. It functions in the pathway porphyrin-containing compound metabolism; protoporphyrin-IX biosynthesis; coproporphyrinogen-III from 5-aminolevulinate: step 4/4. In terms of biological role, catalyzes the decarboxylation of four acetate groups of uroporphyrinogen-III to yield coproporphyrinogen-III. The polypeptide is Uroporphyrinogen decarboxylase (Francisella tularensis subsp. mediasiatica (strain FSC147)).